The chain runs to 111 residues: Large ribosomal subunit protein uL23 (111 aa).

The protein belongs to the universal ribosomal protein uL23 family. As to quaternary structure, part of the 50S ribosomal subunit. Contacts protein L29, and trigger factor when it is bound to the ribosome.

Functionally, one of the early assembly proteins it binds 23S rRNA. One of the proteins that surrounds the polypeptide exit tunnel on the outside of the ribosome. Forms the main docking site for trigger factor binding to the ribosome. The sequence is that of Large ribosomal subunit protein uL23 from Chlamydia muridarum (strain MoPn / Nigg).